The following is a 314-amino-acid chain: Olfactory receptor 9A4 (314 aa).

The Extracellular segment spans residues 1–24 (MLMNYSSATEFYLLGFPGSEELHH). Asparagine 4 is a glycosylation site (N-linked (GlcNAc...) asparagine). The chain crosses the membrane as a helical span at residues 25 to 45 (ILFAIFFFFYLVTLMGNTVII). Residues 46–53 (MIVCVDKR) lie on the Cytoplasmic side of the membrane. The chain crosses the membrane as a helical span at residues 54–74 (LQSPMYFFLGHLSALEILVTT). At 75–99 (IIVPVMLWGLLLPGMQTIYLSACVV) the chain is on the extracellular side. The cysteines at positions 97 and 189 are disulfide-linked. Residues 100–120 (QLFLYLAVGTTEFALLGAMAV) form a helical membrane-spanning segment. Over 121-139 (DRYVAVCNPLRYNIIMNRH) the chain is Cytoplasmic. Residues 140–160 (TCNFVVLVSWVFGFLFQIWPV) form a helical membrane-spanning segment. Residues 161 to 197 (YVMFQLTYCKSNVVNNFFCDRGQLLKLSCNNTLFTEF) are Extracellular-facing. The N-linked (GlcNAc...) asparagine glycan is linked to asparagine 190. Residues 198-217 (ILFLMAVFVLFGSLIPTIVS) traverse the membrane as a helical segment. The Cytoplasmic portion of the chain corresponds to 218–237 (NAYIISTILKIPSSSGRRKS). Residues 238 to 258 (FSTCASHFTCVVIGYGSCLFL) form a helical membrane-spanning segment. Over 259-271 (YVKPKQTQAADYN) the chain is Extracellular. A helical membrane pass occupies residues 272-292 (WVVSLMVSVVTPFLNPFIFTL). Residues 293–314 (RNDKVIEALRDGVKRCCQLFRN) are Cytoplasmic-facing.

The protein belongs to the G-protein coupled receptor 1 family.

Its subcellular location is the cell membrane. Functionally, odorant receptor. The chain is Olfactory receptor 9A4 (OR9A4) from Homo sapiens (Human).